The following is a 1111-amino-acid chain: Receptor-type guanylate cyclase gcy-7 (1111 aa).

Positions 1 to 24 (MKPFYSMSLVLFLVITLLPKPMFP) are cleaved as a signal peptide. Residues 25-488 (QVATGTTGNV…CPKSFVDEYL (464 aa)) are Extracellular-facing. N-linked (GlcNAc...) asparagine glycans are attached at residues Asn-80, Asn-300, Asn-326, Asn-353, Asn-389, Asn-407, Asn-430, and Asn-441. Residues 489–509 (IWVIVAIVVLFLAITAAACGI) form a helical membrane-spanning segment. Over 510–1111 (YFSIQARRQE…TLKSDEQLSD (602 aa)) the chain is Cytoplasmic. Residues 536 to 838 (QINSKQKGKG…NDNLMDHVFN (303 aa)) form the Protein kinase domain. ATP is bound by residues 542 to 550 (KGKGEHSVR) and Lys-568. In terms of domain architecture, Guanylate cyclase spans 896 to 1026 (TIFFSDVVQF…DAVNTASRME (131 aa)).

Belongs to the adenylyl cyclase class-4/guanylyl cyclase family. In terms of tissue distribution, expressed asymmetrically in ASE left (ASEL) sensory neuron. Expressed in excretory canal cell.

It localises to the cell membrane. It catalyses the reaction GTP = 3',5'-cyclic GMP + diphosphate. Guanylate cyclase involved in the production of the second messenger cGMP. Unlike other guanylate cyclases expressed in ASE neurons, may not play a role in chemotaxis responses toward salt ions in ASEL (ASE left) sensory neurons. The sequence is that of Receptor-type guanylate cyclase gcy-7 from Caenorhabditis elegans.